We begin with the raw amino-acid sequence, 398 residues long: Signal-regulatory protein beta-1 (398 aa).

The signal sequence occupies residues 1–29; the sequence is MPVPASWPHLPSPFLLMTLLLGRLTGVAG. The Ig-like V-type domain maps to 30-136; sequence EDELQVIQPE…SPDDVEFKSG (107 aa). The Extracellular portion of the chain corresponds to 30 to 371; the sequence is EDELQVIQPE…EAALAPTAPL (342 aa). Intrachain disulfides connect Cys54–Cys120 and Cys169–Cys227. Ig-like C1-type domains lie at 147–246 and 253–347; these read PSAP…ANLS and PTLE…YALE. Asn244, Asn269, and Asn291 each carry an N-linked (GlcNAc...) asparagine glycan. A helical membrane pass occupies residues 372–392; sequence LVALLLGPKLLLVVGVSAIYI. At 393 to 398 the chain is on the cytoplasmic side; it reads CWKQKA.

As to quaternary structure, homodimer; disulfide-linked. Interacts with TYROBP. This interaction results in the recruitment of SYK. In terms of processing, N-glycosylated. In terms of tissue distribution, detected in monocytes and dendritic cells.

The protein resides in the cell membrane. Immunoglobulin-like cell surface receptor involved in the negative regulation of receptor tyrosine kinase-coupled signaling processes. Also participates in the recruitment of tyrosine kinase SYK. Triggers activation of myeloid cells when associated with TYROBP. This is Signal-regulatory protein beta-1 (SIRPB1) from Homo sapiens (Human).